Here is a 438-residue protein sequence, read N- to C-terminus: C4-dicarboxylate transport protein 1 (438 aa).

Helical transmembrane passes span 20-42 (LYVQVLIAILIGAMVGCLWPSVA), 57-77 (LIKMVIAPIIFCTVTSGIAHI), 90-112 (ALFYFEIVSSFALLLGLAMGNLV), 160-179 (VLQVLLFAILFGFSLMALGK), 192-214 (AHAVFGVIAIVMKAAPIGAFGAM), 229-251 (LIGLIALFYVTAALFVVVVLGLI), 324-346 (LFIAQALGVDLSFGQQLTILLVA), and 361-383 (FITLAATLSVVNPALVPGMAIVF).

This sequence belongs to the dicarboxylate/amino acid:cation symporter (DAACS) (TC 2.A.23) family.

The protein localises to the cell inner membrane. Functionally, responsible for the transport of dicarboxylates such as succinate, fumarate, and malate from the periplasm across the membrane. This is C4-dicarboxylate transport protein 1 from Bradyrhizobium diazoefficiens (strain JCM 10833 / BCRC 13528 / IAM 13628 / NBRC 14792 / USDA 110).